The following is a 149-amino-acid chain: MKVIFLQDVKGKGKKGEVKNVADGYAHNFLIKKGLAVEATSANISALEGQKKKEKKEAAEELKSAKELKKQLEEITVELSAKSGEGGRLFGSVTSKQIADALQKGHQLKVDKRKIELNDAIRSLGYTNVPVKLHPEVQATLKVHVKEQS.

It belongs to the bacterial ribosomal protein bL9 family.

Binds to the 23S rRNA. In Bacillus licheniformis (strain ATCC 14580 / DSM 13 / JCM 2505 / CCUG 7422 / NBRC 12200 / NCIMB 9375 / NCTC 10341 / NRRL NRS-1264 / Gibson 46), this protein is Large ribosomal subunit protein bL9.